A 620-amino-acid chain; its full sequence is Acetylcholinesterase 1 (620 aa).

The N-terminal stretch at 1 to 31 (MRNSLLFFIFLPSTILAVDLIHLHDGSPLFG) is a signal peptide. N-linked (GlcNAc...) asparagine glycosylation occurs at asparagine 74. The cysteines at positions 82 and 109 are disulfide-linked. The active-site Acyl-ester intermediate is serine 216. Cysteine 270 and cysteine 286 are disulfide-bonded. Residue asparagine 272 is glycosylated (N-linked (GlcNAc...) asparagine). Residues glutamate 346 and histidine 468 each act as charge relay system in the active site. Cysteine 430 and cysteine 558 form a disulfide bridge. N-linked (GlcNAc...) asparagine glycans are attached at residues asparagine 486 and asparagine 536.

Belongs to the type-B carboxylesterase/lipase family. As to quaternary structure, oligomer composed of disulfide-linked homodimers.

It is found in the synapse. Its subcellular location is the secreted. The protein resides in the cell membrane. The catalysed reaction is acetylcholine + H2O = choline + acetate + H(+). Its function is as follows. Rapidly hydrolyzes acetylcholine and releases choline into the synapse. It can hydrolyze propionylcholine and butyrylthiocholine in vitro. The protein is Acetylcholinesterase 1 (ace-1) of Caenorhabditis elegans.